The primary structure comprises 207 residues: Uracil phosphoribosyltransferase (207 aa).

Residues arginine 77, arginine 102, and 129 to 137 (DPMLATGVS) each bind 5-phospho-alpha-D-ribose 1-diphosphate. Uracil contacts are provided by residues isoleucine 192 and 197–199 (GDA). Residue aspartate 198 coordinates 5-phospho-alpha-D-ribose 1-diphosphate.

It belongs to the UPRTase family. It depends on Mg(2+) as a cofactor.

It catalyses the reaction UMP + diphosphate = 5-phospho-alpha-D-ribose 1-diphosphate + uracil. It participates in pyrimidine metabolism; UMP biosynthesis via salvage pathway; UMP from uracil: step 1/1. Allosterically activated by GTP. In terms of biological role, catalyzes the conversion of uracil and 5-phospho-alpha-D-ribose 1-diphosphate (PRPP) to UMP and diphosphate. The polypeptide is Uracil phosphoribosyltransferase (Fervidobacterium nodosum (strain ATCC 35602 / DSM 5306 / Rt17-B1)).